A 542-amino-acid polypeptide reads, in one-letter code: 4-coumarate--CoA ligase-like 1 (542 aa).

ATP-binding residues include Ser189, Ser190, Gly191, Thr192, Thr193, and Lys197. Tyr237 contributes to the (E)-4-coumaroyl-AMP binding site. Residue Arg258 coordinates CoA. The tract at residues 260–331 (DLRIFLNALI…AKFPNVQVQE (72 aa)) is SBD1. Residues Ala309, Glu331, Ala332, and Thr336 each contribute to the (E)-4-coumaroyl-AMP site. Residues Glu331, Ala332, Thr336, Asp420, and Arg435 each coordinate ATP. The SBD2 stretch occupies residues 332–399 (AYGLTEHSCI…VRSQCVMQGY (68 aa)). (E)-4-coumaroyl-AMP is bound by residues Lys437 and Lys441. CoA contacts are provided by Lys443 and Gly444. Residue Lys526 participates in ATP binding.

It belongs to the ATP-dependent AMP-binding enzyme family. In terms of assembly, interacts with TKPR1, PKSA and PKSB. The cofactor is Mg(2+). Mostly confined to anther tapetal cells.

It localises to the endoplasmic reticulum. The enzyme catalyses (E)-4-coumarate + ATP + CoA = (E)-4-coumaroyl-CoA + AMP + diphosphate. The catalysed reaction is (E)-4-coumarate + ATP + H(+) = (E)-4-coumaroyl-AMP + diphosphate. It carries out the reaction (E)-4-coumaroyl-AMP + CoA = (E)-4-coumaroyl-CoA + AMP + H(+). Functionally, carboxylate--CoA ligase that may use 4-coumarate as substrate. Follows a two-step reaction mechanism, wherein the carboxylate substrate first undergoes adenylation by ATP, followed by a thioesterification in the presence of CoA to yield the final CoA thioester. This Arabidopsis thaliana (Mouse-ear cress) protein is 4-coumarate--CoA ligase-like 1.